Reading from the N-terminus, the 248-residue chain is ATP synthase subunit a, chloroplastic (248 aa).

5 helical membrane passes run 38–58 (QVLI…AIAV), 96–116 (VPFI…GALL), 135–155 (INTT…AGLT), 200–220 (LVVV…VMFL), and 221–241 (GLFT…AYIG).

The protein belongs to the ATPase A chain family. F-type ATPases have 2 components, CF(1) - the catalytic core - and CF(0) - the membrane proton channel. CF(1) has five subunits: alpha(3), beta(3), gamma(1), delta(1), epsilon(1). CF(0) has four main subunits: a, b, b' and c.

It is found in the plastid. The protein localises to the chloroplast thylakoid membrane. Functionally, key component of the proton channel; it plays a direct role in the translocation of protons across the membrane. This Nuphar advena (Common spatterdock) protein is ATP synthase subunit a, chloroplastic.